The primary structure comprises 190 residues: Xanthine phosphoribosyltransferase (190 aa).

Xanthine contacts are provided by leucine 20 and asparagine 27. 128-132 contacts 5-phospho-alpha-D-ribose 1-diphosphate; the sequence is ANGHA. Lysine 156 contributes to the xanthine binding site.

Belongs to the purine/pyrimidine phosphoribosyltransferase family. Xpt subfamily. Homodimer.

The protein localises to the cytoplasm. It carries out the reaction XMP + diphosphate = xanthine + 5-phospho-alpha-D-ribose 1-diphosphate. Its pathway is purine metabolism; XMP biosynthesis via salvage pathway; XMP from xanthine: step 1/1. Functionally, converts the preformed base xanthine, a product of nucleic acid breakdown, to xanthosine 5'-monophosphate (XMP), so it can be reused for RNA or DNA synthesis. This chain is Xanthine phosphoribosyltransferase, found in Ectopseudomonas mendocina (strain ymp) (Pseudomonas mendocina).